The sequence spans 414 residues: Eukaryotic initiation factor 4A-3 (414 aa).

The short motif at 41 to 69 is the Q motif element; the sequence is ESFDDMGLQENLLRGIYAYGFEKPSAIQQ. In terms of domain architecture, Helicase ATP-binding spans 72-242; it reads IVPFCKGLDV…RKFMNKPVRI (171 aa). Residue 85 to 92 coordinates ATP; sequence AQSGTGKT. The DEAD box motif lies at 190 to 193; that stretch reads DEAD. Residues 253-414 enclose the Helicase C-terminal domain; that stretch reads GIKQFYVNVE…ELPANVADLL (162 aa).

It belongs to the DEAD box helicase family. eIF4A subfamily. EIF4F is a multi-subunit complex, the composition of which varies with external and internal environmental conditions. It is composed of at least EIF4A, EIF4E and EIF4G. Interacts with DRM2 (via UBA domains).

It localises to the cytoplasm. The protein resides in the nucleus. The catalysed reaction is ATP + H2O = ADP + phosphate + H(+). Its function is as follows. ATP-dependent RNA helicase which is a subunit of the eIF4F complex involved in cap recognition and is required for mRNA binding to ribosome. In the current model of translation initiation, eIF4A unwinds RNA secondary structures in the 5'-UTR of mRNAs which is necessary to allow efficient binding of the small ribosomal subunit, and subsequent scanning for the initiator codon. This is Eukaryotic initiation factor 4A-3 from Oryza sativa subsp. japonica (Rice).